A 397-amino-acid chain; its full sequence is Mediator of RNA polymerase II transcription subunit 3 (397 aa).

Residue M1 is modified to N-acetylmethionine. Over residues 147–165 (ASTPTTTATPHANPITHAH) the composition is skewed to low complexity. Disordered stretches follow at residues 147–227 (ASTP…AQAQ), 288–327 (SMGAQNQGGQVSMSQFNGSGNGSNPNTNTNSNNTPLQSQL), and 346–370 (FQQQQQQQQQQQQPQPQYNMNMGMN). 2 stretches are compositionally biased toward polar residues: residues 166-178 (SLSNPNSTATMQH) and 189-202 (SGSTMGTPTVHNST). Residues 211 to 223 (KKPRKPRQTKKAK) are compositionally biased toward basic residues. The segment covering 290 to 303 (GAQNQGGQVSMSQF) has biased composition (polar residues). Residues 309 to 322 (GSNPNTNTNSNNTP) are compositionally biased toward low complexity.

The protein belongs to the mediator complex subunit 3 family. As to quaternary structure, component of the Mediator complex, which is composed of at least 21 subunits that form three structurally distinct submodules. The Mediator head module contains MED6, MED8, MED11, SRB4/MED17, SRB5/MED18, ROX3/MED19, SRB2/MED20 and SRB6/MED22, the middle module contains MED1, MED4, NUT1/MED5, MED7, CSE2/MED9, NUT2/MED10, SRB7/MED21 and SOH1/MED31, and the tail module contains MED2, PGD1/MED3, RGR1/MED14, GAL11/MED15 and SIN4/MED16. The head and the middle modules interact directly with RNA polymerase II, whereas the elongated tail module interacts with gene-specific regulatory proteins. PGD1/MED3 interacts directly with the CYC8-TUP1 corepressor proteins.

The protein resides in the nucleus. Its function is as follows. Component of the Mediator complex, a coactivator involved in the regulated transcription of nearly all RNA polymerase II-dependent genes. Mediator functions as a bridge to convey information from gene-specific regulatory proteins to the basal RNA polymerase II transcription machinery. The Mediator complex, having a compact conformation in its free form, is recruited to promoters by direct interactions with regulatory proteins and serves for the assembly of a functional preinitiation complex with RNA polymerase II and the general transcription factors. The Mediator complex unfolds to an extended conformation and partially surrounds RNA polymerase II, specifically interacting with the unphosphorylated form of the C-terminal domain (CTD) of RNA polymerase II. The Mediator complex dissociates from the RNA polymerase II holoenzyme and stays at the promoter when transcriptional elongation begins. PGD1/MED3 is also involved in direct repeat recombination. This is Mediator of RNA polymerase II transcription subunit 3 (PGD1) from Saccharomyces cerevisiae (strain ATCC 204508 / S288c) (Baker's yeast).